The primary structure comprises 593 residues: Translation initiation factor rli1 (593 aa).

2 consecutive 4Fe-4S ferredoxin-type domains span residues 7-39 (RIAIVSEDKCRPKKCRQECRRSCPVVRTGKLCI) and 46-75 (RIAFISETLCIGCGICVKKCPFGAINIINL). ABC transporter domains are found at residues 70 to 318 (INII…FLDG) and 334 to 556 (FRLA…LKNL). Residues 110 to 117 (GTNGIGKS) and 382 to 389 (GENGTGKT) each bind ATP.

This sequence belongs to the ABC transporter superfamily. In terms of assembly, component of the multifactor complex (MFC). The complex associates with pre-initiation complexes.

It localises to the cytoplasm. It is found in the nucleus. Component of the multifactor complex (MFC) involved in translation initiation. Required for the binding of MFC to the 40S ribosome. Required for the processing and nuclear export of the 60S and 40S ribosomal subunits. The chain is Translation initiation factor rli1 (rli1) from Schizosaccharomyces pombe (strain 972 / ATCC 24843) (Fission yeast).